We begin with the raw amino-acid sequence, 1089 residues long: Translocase of chloroplast 120, chloroplastic (1089 aa).

Residue Gly-2 is modified to N-acetylglycine. Disordered regions lie at residues 158 to 179, 255 to 339, and 353 to 381; these read ATEDVNLENGNTHSSSENGVVS, TLSP…GLGR, and QPRVNGNVSHNQPQQAEDSTTAETDEHDE. Residues 165-176 show a composition bias toward polar residues; it reads ENGNTHSSSENG. Phosphoserine is present on residues Ser-179, Ser-263, and Ser-283. Over residues 300–312 the composition is skewed to basic and acidic residues; the sequence is EIKESQHMERESE. Over residues 327–339 the composition is skewed to low complexity; the sequence is AALPPARPAGLGR. Polar residues predominate over residues 353–374; it reads QPRVNGNVSHNQPQQAEDSTTA. Residues 454-683 enclose the AIG1-type G domain; sequence DFSCTIMVLG…KLQDNIPGGQ (230 aa). The segment at 463–470 is G1; that stretch reads GKSGVGKS. Residues 466 to 471 and 485 to 490 contribute to the GTP site; these read GVGKSA and DAFQVG. Ser-470 serves as a coordination point for Mg(2+). The homodimerization stretch occupies residues 485–488; the sequence is DAFQ. Residues 489-493 form a G2 region; it reads VGTKK. Residues 510–513 are G3; the sequence is DTPG. The segment at 548–553 is homodimerization; the sequence is RLDMQS. A G4 region spans residues 582 to 585; sequence THAA. GTP-binding positions include His-583 and 631–632; that span reads EN. The segment at 631–633 is G5; sequence ENH. Residues 710–748 form a disordered region; that stretch reads PEQQYDDEDDEDDLDESSDSEEESEYDELPPFKRLTKAE. Residues 713 to 737 show a composition bias toward acidic residues; it reads QYDDEDDEDDLDESSDSEEESEYDE. The stretch at 767–788 forms a coiled coil; the sequence is REKLFMKRQMKEERKRRKLLKK. Residues 1064–1080 traverse the membrane as a helical segment; it reads LAVVALVPLFKKLLTYY.

This sequence belongs to the TRAFAC class TrmE-Era-EngA-EngB-Septin-like GTPase superfamily. AIG1/Toc34/Toc159-like paraseptin GTPase family. TOC159 subfamily. As to quaternary structure, homodimer. Part of the TOC core complex that includes 1 protein for the specific recognition of transit peptides surrounded by a ring composed of four proteins forming translocation channels, and four to five GTP-binding proteins providing energy. This core complex can interact with components of the TIC complex to form a larger import complex. Chloroplastic protein precursor such as prSS (precursor of the RuBisCO small subunit) interacts with these complexes. The TOC complex contains a specific subset of polar lipids such as digalactosyldiacylglyceride (DGDG), phosphatidylcholine (PC) and phosphatidylglycerol (PG). Mg(2+) is required as a cofactor. Post-translationally, phosphorylated by KOC1. As to expression, expressed in seedlings, flowers, and roots.

Its subcellular location is the plastid. The protein resides in the chloroplast outer membrane. It is found in the cytoplasm. Functionally, GTPase involved in protein precursor import into chloroplasts. Seems to recognize chloroplast-destined precursor proteins and regulate their presentation to the translocation channel through GTP hydrolysis. Probably specialized in the import of nuclear encoded non-photosynthetic preproteins from the cytoplasm to the chloroplast. The chain is Translocase of chloroplast 120, chloroplastic from Arabidopsis thaliana (Mouse-ear cress).